Consider the following 619-residue polypeptide: Chaperone protein HscA homolog (619 aa).

The protein belongs to the heat shock protein 70 family.

Functionally, chaperone involved in the maturation of iron-sulfur cluster-containing proteins. Has a low intrinsic ATPase activity which is markedly stimulated by HscB. The chain is Chaperone protein HscA homolog from Shewanella frigidimarina (strain NCIMB 400).